The sequence spans 149 residues: MVYKTKLGEIEISDESIFTFEKGIPGFEHLRKFALVFPQETFPIGWLLSLEDSEVGLPVVDPKLVRADYDPAVPSEDLEEIEAENQEALLFFCVLTIPPGKPEKTTINLRAPIILNQKKKKGIQTILENEDYQLRHLLSEEIERSKTVV.

Belongs to the FliW family. Interacts with translational regulator CsrA and flagellin(s).

It localises to the cytoplasm. Its function is as follows. Acts as an anti-CsrA protein, binds CsrA and prevents it from repressing translation of its target genes, one of which is flagellin. Binds to flagellin and participates in the assembly of the flagellum. The chain is Flagellar assembly factor FliW from Thermotoga maritima (strain ATCC 43589 / DSM 3109 / JCM 10099 / NBRC 100826 / MSB8).